The following is a 601-amino-acid chain: Oligoendopeptidase F homolog (601 aa).

H387 is a Zn(2+) binding site. Residue E388 is part of the active site. Residues H391 and H394 each contribute to the Zn(2+) site.

The protein belongs to the peptidase M3 family. Requires Zn(2+) as cofactor.

Functionally, hydrolyzes peptides containing between 7 and 17 amino acids with a rather wide specificity. This chain is Oligoendopeptidase F homolog (pepF), found in Lactococcus lactis subsp. lactis (strain IL1403) (Streptococcus lactis).